The sequence spans 145 residues: MGSGSSRSGRIPRRRRSPDRRQTGPGETASEGGTADQAPTAAGQEESGRDPRPATPSGGREETLRLLDQLLAESEAWGPQELTPRGPARLAPAVSPEKKVKGNPEDSCASEAPGNSPKRPEGQSAISYDYSEEELMASIEREYCR.

Residues 1 to 129 (MGSGSSRSGR…PEGQSAISYD (129 aa)) are disordered. Gly-2 is lipidated: N-myristoyl glycine. Positions 29-33 (ASEGG) match the Ciliary targeting motif motif. Phosphoserine is present on Ser-116.

As to quaternary structure, interacts (when myristoylated) with UNC119 and UNC119B; interaction is required for localization to cilium. Expressed primarily in the kidney and liver. Expressed at lower levels in the lung, brain and heart.

The protein localises to the cell projection. It localises to the cilium membrane. It is found in the cytoplasm. The protein resides in the cytoskeleton. Its subcellular location is the cilium axoneme. The sequence is that of Cystin-1 (Cys1) from Mus musculus (Mouse).